Reading from the N-terminus, the 158-residue chain is Glycine/sarcosine/betaine reductase complex component A1 (158 aa).

Residue U44 is part of the active site. Position 44 (U44) is a non-standard amino acid, selenocysteine.

This sequence belongs to the GrdA family. Monomer. Component of the glycine, sarcosine and betaine reductase complexes, together with components B and C.

It carries out the reaction acetyl phosphate + [thioredoxin]-disulfide + NH4(+) + H2O = [thioredoxin]-dithiol + glycine + phosphate + H(+). The catalysed reaction is acetyl phosphate + methylamine + [thioredoxin]-disulfide + H2O = sarcosine + [thioredoxin]-dithiol + phosphate + H(+). The enzyme catalyses acetyl phosphate + trimethylamine + [thioredoxin]-disulfide + H2O = glycine betaine + [thioredoxin]-dithiol + phosphate + H(+). Functionally, in the first step of glycine, betaine and sarcosine reductases, the substrate is bound to component PB via a Schiff base intermediate. Then the PB-activated substrate is nucleophilically attacked by the selenol anion of component PA to transform it to a carboxymethylated selenoether and the respective amine. By action of component PC, acetyl phosphate is formed, leaving component PA in its oxidized state. Finally component PA becomes reduced by the thioredoxin system to start a new catalytic cycle of reductive deamination. This Peptoclostridium acidaminophilum (Eubacterium acidaminophilum) protein is Glycine/sarcosine/betaine reductase complex component A1 (grdA1).